A 2196-amino-acid polypeptide reads, in one-letter code: Genome polyprotein (2196 aa).

Residue glycine 2 is the site of N-myristoyl glycine; by host attachment. Over 2 to 1506 (GAQVSTQKTG…HVSRAFICLQ (1505 aa)) the chain is Cytoplasmic. Residues 568–584 (DLQGDSEHAVESAVSRV) are amphipathic alpha-helix. Catalysis depends on for protease 2A activity residues histidine 883 and aspartate 901. Positions 918 and 920 each coordinate Zn(2+). The active-site For protease 2A activity is the cysteine 972. Zn(2+) contacts are provided by cysteine 978 and histidine 980. Positions 1112–1184 (NNGWLKKFTE…EQSAPSQSDQ (73 aa)) are membrane-binding. An oligomerization region spans residues 1112–1250 (NNGWLKKFTE…SPGAGKSVAT (139 aa)). The tract at residues 1133–1137 (AIKIQ) is RNA-binding. An SF3 helicase domain is found at 1216–1372 (EKKMSNYIQF…SMYSQNGKIN (157 aa)). Residues cysteine 1380, cysteine 1392, and cysteine 1397 each contribute to the Zn(2+) site. The segment at 1380 to 1397 (CDEECCPVNFKKCCPLVC) adopts a C4-type; degenerate zinc-finger fold. The interval 1424–1431 (EYNHRHSV) is RNA-binding. The oligomerization stretch occupies residues 1435–1440 (LEALFQ). The stretch at 1507–1522 (ALTTFVSVAGIIYIIY) is an intramembrane region. Topologically, residues 1523–2196 (KLFAGFQGAY…TLRRKWLDSF (674 aa)) are cytoplasmic. Tyrosine 1532 is subject to O-(5'-phospho-RNA)-tyrosine. The region spanning 1552–1730 (GPAFEFAVAM…FSAALLKHYF (179 aa)) is the Peptidase C3 domain. Catalysis depends on for protease 3C activity residues histidine 1591, glutamate 1622, and cysteine 1698. Residues 1961–2077 (GHLIAFDYSG…SYPWPIDASL (117 aa)) form the RdRp catalytic domain. Positions 1967 and 2063 each coordinate Mg(2+).

It belongs to the picornaviruses polyprotein family. Interacts with capsid protein VP1 and capsid protein VP3 to form heterotrimeric protomers. As to quaternary structure, interacts with capsid protein VP0, and capsid protein VP3 to form heterotrimeric protomers. Five protomers subsequently associate to form pentamers which serve as building blocks for the capsid. Interacts with capsid protein VP2, capsid protein VP3 and capsid protein VP4 following cleavage of capsid protein VP0. In terms of assembly, interacts with capsid protein VP1 and capsid protein VP3 in the mature capsid. Interacts with capsid protein VP0 and capsid protein VP1 to form heterotrimeric protomers. Five protomers subsequently associate to form pentamers which serve as building blocks for the capsid. Interacts with capsid protein VP4 in the mature capsid. Interacts with protein 2C; this interaction may be important for virion morphogenesis. As to quaternary structure, interacts with capsid protein VP1 and capsid protein VP3. In terms of assembly, homodimer. Homohexamer; forms a hexameric ring structure with 6-fold symmetry characteristic of AAA+ ATPases. Interacts (via N-terminus) with host RTN3 (via reticulon domain); this interaction is important for viral replication. Interacts with capsid protein VP3; this interaction may be important for virion morphogenesis. As to quaternary structure, interacts with protein 3CD. In terms of assembly, homodimer. Interacts with host GBF1. Interacts (via GOLD domain) with host ACBD3 (via GOLD domain); this interaction allows the formation of a viral protein 3A/ACBD3 heterotetramer with a 2:2 stoichiometry, which will stimulate the recruitment of host PI4KB in order to synthesize PI4P at the viral RNA replication sites. Interacts with RNA-directed RNA polymerase. As to quaternary structure, interacts with protein 3AB and with RNA-directed RNA polymerase. In terms of assembly, interacts with Viral protein genome-linked and with protein 3CD. It depends on Mg(2+) as a cofactor. In terms of processing, specific enzymatic cleavages in vivo by the viral proteases yield processing intermediates and the mature proteins. Post-translationally, myristoylation is required for the formation of pentamers during virus assembly. Further assembly of 12 pentamers and a molecule of genomic RNA generates the provirion. During virion maturation, immature virions are rendered infectious following cleavage of VP0 into VP4 and VP2. This maturation seems to be an autocatalytic event triggered by the presence of RNA in the capsid and it is followed by a conformational change infectious virion. In terms of processing, myristoylation is required during RNA encapsidation and formation of the mature virus particle. Post-translationally, VPg is uridylylated by the polymerase into VPg-pUpU. This acts as a nucleotide-peptide primer for the genomic RNA replication.

The protein resides in the virion. It is found in the host cytoplasm. The protein localises to the host cytoplasmic vesicle membrane. It localises to the host nucleus. It carries out the reaction a ribonucleoside 5'-triphosphate + H2O = a ribonucleoside 5'-diphosphate + phosphate + H(+). The catalysed reaction is Selective cleavage of Tyr-|-Gly bond in the picornavirus polyprotein.. It catalyses the reaction RNA(n) + a ribonucleoside 5'-triphosphate = RNA(n+1) + diphosphate. The enzyme catalyses Selective cleavage of Gln-|-Gly bond in the poliovirus polyprotein. In other picornavirus reactions Glu may be substituted for Gln, and Ser or Thr for Gly.. With respect to regulation, replication or transcription is subject to high level of random mutations by the nucleotide analog ribavirin. Forms an icosahedral capsid of pseudo T=3 symmetry with capsid proteins VP2 and VP3. The capsid is 300 Angstroms in diameter, composed of 60 copies of each capsid protein and enclosing the viral positive strand RNA genome. Capsid protein VP1 mainly forms the vertices of the capsid. Capsid protein VP1 interacts with host cell receptor to provide virion attachment to target host cells. This attachment induces virion internalization. Tyrosine kinases are probably involved in the entry process. After binding to its receptor, the capsid undergoes conformational changes. Capsid protein VP1 N-terminus (that contains an amphipathic alpha-helix) and capsid protein VP4 are externalized. Together, they shape a pore in the host membrane through which viral genome is translocated to host cell cytoplasm. In terms of biological role, forms an icosahedral capsid of pseudo T=3 symmetry with capsid proteins VP2 and VP3. The capsid is 300 Angstroms in diameter, composed of 60 copies of each capsid protein and enclosing the viral positive strand RNA genome. Its function is as follows. Lies on the inner surface of the capsid shell. After binding to the host receptor, the capsid undergoes conformational changes. Capsid protein VP4 is released, Capsid protein VP1 N-terminus is externalized, and together, they shape a pore in the host membrane through which the viral genome is translocated into the host cell cytoplasm. Functionally, component of immature procapsids, which is cleaved into capsid proteins VP4 and VP2 after maturation. Allows the capsid to remain inactive before the maturation step. Cysteine protease that cleaves viral polyprotein and specific host proteins. It is responsible for the autocatalytic cleavage between the P1 and P2 regions, which is the first cleavage occurring in the polyprotein. Also cleaves the host translation initiation factor EIF4G1, in order to shut down the capped cellular mRNA translation. Inhibits the host nucleus-cytoplasm protein and RNA trafficking by cleaving host members of the nuclear pores. Counteracts stress granule formation probably by antagonizing its assembly or promoting its dissassembly. In terms of biological role, plays an essential role in the virus replication cycle by acting as a viroporin. Creates a pore in the host endoplasmic reticulum and as a consequence releases Ca2+ in the cytoplasm of infected cell. In turn, high levels of cytoplasmic calcium may trigger membrane trafficking and transport of viral ER-associated proteins to viroplasms, sites of viral genome replication. Its function is as follows. Induces and associates with structural rearrangements of intracellular membranes. Displays RNA-binding, nucleotide binding and NTPase activities. May play a role in virion morphogenesis and viral RNA encapsidation by interacting with the capsid protein VP3. Functionally, localizes the viral replication complex to the surface of membranous vesicles. Together with protein 3CD binds the Cis-Active RNA Element (CRE) which is involved in RNA synthesis initiation. Acts as a cofactor to stimulate the activity of 3D polymerase, maybe through a nucleid acid chaperone activity. Localizes the viral replication complex to the surface of membranous vesicles. It inhibits host cell endoplasmic reticulum-to-Golgi apparatus transport and causes the disassembly of the Golgi complex, possibly through GBF1 interaction. This would result in depletion of MHC, trail receptors and IFN receptors at the host cell surface. Plays an essential role in viral RNA replication by recruiting ACBD3 and PI4KB at the viral replication sites, thereby allowing the formation of the rearranged membranous structures where viral replication takes place. In terms of biological role, acts as a primer for viral RNA replication and remains covalently bound to viral genomic RNA. VPg is uridylylated prior to priming replication into VPg-pUpU. The oriI viral genomic sequence may act as a template for this. The VPg-pUpU is then used as primer on the genomic RNA poly(A) by the RNA-dependent RNA polymerase to replicate the viral genome. During genome replication, the VPg-RNA linkage is removed by the host TDP2, thereby accelerating replication. During the late stage of the replication cycle, host TDP2 is excluded from sites of viral RNA synthesis and encapsidation, allowing for the generation of progeny virions. Its function is as follows. Involved in the viral replication complex and viral polypeptide maturation. It exhibits protease activity with a specificity and catalytic efficiency that is different from protease 3C. Protein 3CD lacks polymerase activity. Protein 3CD binds to the 5'UTR of the viral genome. Functionally, replicates the viral genomic RNA on the surface of intracellular membranes. May form linear arrays of subunits that propagate along a strong head-to-tail interaction called interface-I. Covalently attaches UMP to a tyrosine of VPg, which is used to prime RNA synthesis. The positive stranded RNA genome is first replicated at virus induced membranous vesicles, creating a dsRNA genomic replication form. This dsRNA is then used as template to synthesize positive stranded RNA genomes. ss(+)RNA genomes are either translated, replicated or encapsidated. Major viral protease that mediates proteolytic processing of the polyprotein. Cleaves host EIF5B, contributing to host translation shutoff. Also cleaves host PABPC1, contributing to host translation shutoff. Cleaves host NLRP1, triggers host N-glycine-mediated degradation of the autoinhibitory NLRP1 N-terminal fragment. This is Genome polyprotein from Homo sapiens (Human).